The following is a 147-amino-acid chain: Hemoglobin subunit beta-1 (147 aa).

One can recognise a Globin domain in the interval 3–147; sequence EWTAAERRHV…VVSALGRQYH (145 aa). The heme b site is built by histidine 64 and histidine 93.

It belongs to the globin family. Hb 1 is a heterotetramer of two alpha-1 and two beta-1 chains. Red blood cells.

Functionally, involved in oxygen transport from gills to the various peripheral tissues. The protein is Hemoglobin subunit beta-1 (hbb1) of Gadus morhua (Atlantic cod).